A 285-amino-acid polypeptide reads, in one-letter code: 2-dehydro-3-deoxyphosphooctonate aldolase (285 aa).

It belongs to the KdsA family.

It localises to the cytoplasm. It catalyses the reaction D-arabinose 5-phosphate + phosphoenolpyruvate + H2O = 3-deoxy-alpha-D-manno-2-octulosonate-8-phosphate + phosphate. The protein operates within carbohydrate biosynthesis; 3-deoxy-D-manno-octulosonate biosynthesis; 3-deoxy-D-manno-octulosonate from D-ribulose 5-phosphate: step 2/3. It participates in bacterial outer membrane biogenesis; lipopolysaccharide biosynthesis. The chain is 2-dehydro-3-deoxyphosphooctonate aldolase from Polaromonas naphthalenivorans (strain CJ2).